The following is a 158-amino-acid chain: SsrA-binding protein (158 aa).

Belongs to the SmpB family.

It is found in the cytoplasm. In terms of biological role, required for rescue of stalled ribosomes mediated by trans-translation. Binds to transfer-messenger RNA (tmRNA), required for stable association of tmRNA with ribosomes. tmRNA and SmpB together mimic tRNA shape, replacing the anticodon stem-loop with SmpB. tmRNA is encoded by the ssrA gene; the 2 termini fold to resemble tRNA(Ala) and it encodes a 'tag peptide', a short internal open reading frame. During trans-translation Ala-aminoacylated tmRNA acts like a tRNA, entering the A-site of stalled ribosomes, displacing the stalled mRNA. The ribosome then switches to translate the ORF on the tmRNA; the nascent peptide is terminated with the 'tag peptide' encoded by the tmRNA and targeted for degradation. The ribosome is freed to recommence translation, which seems to be the essential function of trans-translation. This is SsrA-binding protein from Pseudoalteromonas atlantica (strain T6c / ATCC BAA-1087).